The chain runs to 415 residues: Serine hydroxymethyltransferase (415 aa).

A compositionally biased stretch (basic and acidic residues) spans 1–10; that stretch reads MERSHIRDVD. Residues 1–21 form a disordered region; that stretch reads MERSHIRDVDPDAADALSSER. Residues Leu-119 and 123–125 contribute to the (6S)-5,6,7,8-tetrahydrofolate site; that span reads GHL. Position 228 is an N6-(pyridoxal phosphate)lysine (Lys-228). Position 353-355 (353-355) interacts with (6S)-5,6,7,8-tetrahydrofolate; the sequence is SAF.

This sequence belongs to the SHMT family. As to quaternary structure, homodimer. Pyridoxal 5'-phosphate is required as a cofactor.

It is found in the cytoplasm. It carries out the reaction (6R)-5,10-methylene-5,6,7,8-tetrahydrofolate + glycine + H2O = (6S)-5,6,7,8-tetrahydrofolate + L-serine. It functions in the pathway one-carbon metabolism; tetrahydrofolate interconversion. Its pathway is amino-acid biosynthesis; glycine biosynthesis; glycine from L-serine: step 1/1. Its function is as follows. Catalyzes the reversible interconversion of serine and glycine with tetrahydrofolate (THF) serving as the one-carbon carrier. Also exhibits THF-independent aldolase activity toward beta-hydroxyamino acids, producing glycine and aldehydes, via a retro-aldol mechanism. In Haloquadratum walsbyi (strain DSM 16790 / HBSQ001), this protein is Serine hydroxymethyltransferase.